Here is a 74-residue protein sequence, read N- to C-terminus: Ubiquitin-like protein FUBI (74 aa).

The protein belongs to the ubiquitin family.

The protein is Ubiquitin-like protein FUBI (FAU) of Pongo abelii (Sumatran orangutan).